Consider the following 292-residue polypeptide: Undecaprenyl-diphosphatase (292 aa).

A run of 7 helical transmembrane segments spans residues 1–21 (MSLV…FLPV), 46–66 (FVTI…RADI), 90–110 (LGWY…LLEH), 114–134 (ALGN…LLAA), 192–212 (FLLS…STVP), 225–245 (VVGT…LLAW), and 253–273 (VFVV…LSGV).

It belongs to the UppP family.

Its subcellular location is the cell inner membrane. The catalysed reaction is di-trans,octa-cis-undecaprenyl diphosphate + H2O = di-trans,octa-cis-undecaprenyl phosphate + phosphate + H(+). Functionally, catalyzes the dephosphorylation of undecaprenyl diphosphate (UPP). Confers resistance to bacitracin. This chain is Undecaprenyl-diphosphatase, found in Anaeromyxobacter dehalogenans (strain 2CP-1 / ATCC BAA-258).